The primary structure comprises 598 residues: DNA mismatch repair protein MutL (598 aa).

This sequence belongs to the DNA mismatch repair MutL/HexB family.

In terms of biological role, this protein is involved in the repair of mismatches in DNA. It is required for dam-dependent methyl-directed DNA mismatch repair. May act as a 'molecular matchmaker', a protein that promotes the formation of a stable complex between two or more DNA-binding proteins in an ATP-dependent manner without itself being part of a final effector complex. The polypeptide is DNA mismatch repair protein MutL (Geotalea daltonii (strain DSM 22248 / JCM 15807 / FRC-32) (Geobacter daltonii)).